A 371-amino-acid chain; its full sequence is tRNA-specific 2-thiouridylase MnmA (371 aa).

ATP contacts are provided by residues 12–19 (GMSGGVDS) and methionine 38. The interval 98 to 100 (NPD) is interaction with target base in tRNA. Cysteine 103 (nucleophile) is an active-site residue. A disulfide bridge links cysteine 103 with cysteine 200. Glycine 128 contributes to the ATP binding site. The segment at 150–152 (KDQ) is interaction with tRNA. The Cysteine persulfide intermediate role is filled by cysteine 200. The interval 312–313 (RY) is interaction with tRNA.

Belongs to the MnmA/TRMU family. Interacts with TusE.

The protein resides in the cytoplasm. The enzyme catalyses S-sulfanyl-L-cysteinyl-[protein] + uridine(34) in tRNA + AH2 + ATP = 2-thiouridine(34) in tRNA + L-cysteinyl-[protein] + A + AMP + diphosphate + H(+). In terms of biological role, catalyzes the 2-thiolation of uridine at the wobble position (U34) of tRNA(Lys), tRNA(Glu) and tRNA(Gln), leading to the formation of s(2)U34, the first step of tRNA-mnm(5)s(2)U34 synthesis. Sulfur is provided by IscS, via a sulfur-relay system. Binds ATP and its substrate tRNAs. The polypeptide is tRNA-specific 2-thiouridylase MnmA (Yersinia pestis bv. Antiqua (strain Antiqua)).